Here is an 86-residue protein sequence, read N- to C-terminus: MVVIRLARGGSKKRPFYNLVATDSRNRRDGRFVERVGFYNPVGSEGSENLRIALDRVKYWVDNGAQLSPAVERLVKEHSAKVSAAA.

Belongs to the bacterial ribosomal protein bS16 family.

This is Small ribosomal subunit protein bS16 from Bordetella avium (strain 197N).